A 755-amino-acid polypeptide reads, in one-letter code: Elongation factor G, mitochondrial (755 aa).

A mitochondrion-targeting transit peptide spans 1–38 (MFKRVGLIAGIAGPVAGSSRFSAVSFSKRAFSASSKRC). Residues 63–344 (KKLRNIGISA…AIVEYLPNPS (282 aa)) enclose the tr-type G domain. Residues 72 to 79 (AHIDSGKT), 143 to 147 (DTPGH), and 197 to 200 (NKMD) each bind GTP.

It belongs to the TRAFAC class translation factor GTPase superfamily. Classic translation factor GTPase family. EF-G/EF-2 subfamily.

It localises to the mitochondrion. It functions in the pathway protein biosynthesis; polypeptide chain elongation. Its function is as follows. Mitochondrial GTPase that catalyzes the GTP-dependent ribosomal translocation step during translation elongation. During this step, the ribosome changes from the pre-translocational (PRE) to the post-translocational (POST) state as the newly formed A-site-bound peptidyl-tRNA and P-site-bound deacylated tRNA move to the P and E sites, respectively. Catalyzes the coordinated movement of the two tRNA molecules, the mRNA and conformational changes in the ribosome. This chain is Elongation factor G, mitochondrial, found in Kluyveromyces lactis (strain ATCC 8585 / CBS 2359 / DSM 70799 / NBRC 1267 / NRRL Y-1140 / WM37) (Yeast).